A 760-amino-acid chain; its full sequence is Phosphatidylinositol N-acetylglucosaminyltransferase subunit Q (760 aa).

5 helical membrane passes run 278–298, 349–371, 378–400, 446–468, and 475–497; these read TVASVLLDVALGLMLLSWLHG, LYHIHLWISYIHLMSPFVEHILW, CLGLTVALSLLSDIIALLTFHIY, LFIGTLLFTILLFLLPTTALYYL, and LLVVAVQGLIHLLVDLINSLPLY. A disordered region spans residues 696–748; sequence LAVGVEGPCQDEPPSPRHPLAPSAEQHPASGGLKQSLTPVPSGPGPSLPEPHG.

This sequence belongs to the PIGQ family. As to quaternary structure, component of the glycosylphosphatidylinositol-N-acetylglucosaminyltransferase (GPI-GnT) complex composed at least by PIGA, PIGC, PIGH, PIGP, PIGQ, PIGY and DPM2. Interacts with PIGA, PIGH and PIGC.

It is found in the membrane. It participates in glycolipid biosynthesis; glycosylphosphatidylinositol-anchor biosynthesis. Part of the glycosylphosphatidylinositol-N-acetylglucosaminyltransferase (GPI-GnT) complex that catalyzes the transfer of N-acetylglucosamine from UDP-N-acetylglucosamine to phosphatidylinositol and participates in the first step of GPI biosynthesis. The sequence is that of Phosphatidylinositol N-acetylglucosaminyltransferase subunit Q from Homo sapiens (Human).